The primary structure comprises 283 residues: Release factor glutamine methyltransferase (283 aa).

S-adenosyl-L-methionine-binding positions include 121-125 (GTGSG), Asp144, and Asn188. 188–191 (NPPY) lines the substrate pocket.

Belongs to the protein N5-glutamine methyltransferase family. PrmC subfamily.

It catalyses the reaction L-glutaminyl-[peptide chain release factor] + S-adenosyl-L-methionine = N(5)-methyl-L-glutaminyl-[peptide chain release factor] + S-adenosyl-L-homocysteine + H(+). Methylates the class 1 translation termination release factors RF1/PrfA and RF2/PrfB on the glutamine residue of the universally conserved GGQ motif. The chain is Release factor glutamine methyltransferase from Bacillus cereus (strain ATCC 14579 / DSM 31 / CCUG 7414 / JCM 2152 / NBRC 15305 / NCIMB 9373 / NCTC 2599 / NRRL B-3711).